Reading from the N-terminus, the 370-residue chain is 3-isopropylmalate dehydrogenase 2 (370 aa).

NAD(+) is bound at residue 77-90 (GPKWDAVPYEVRPE). Positions 97, 107, 135, and 226 each coordinate substrate. Residues D226, D250, and D254 each coordinate Mg(2+). 290 to 302 (GSAPDIAGKGLAN) is a binding site for NAD(+).

The protein belongs to the isocitrate and isopropylmalate dehydrogenases family. LeuB type 1 subfamily. As to quaternary structure, homodimer. Requires Mg(2+) as cofactor. Mn(2+) serves as cofactor.

It localises to the cytoplasm. It catalyses the reaction (2R,3S)-3-isopropylmalate + NAD(+) = 4-methyl-2-oxopentanoate + CO2 + NADH. The protein operates within amino-acid biosynthesis; L-leucine biosynthesis; L-leucine from 3-methyl-2-oxobutanoate: step 3/4. Catalyzes the oxidation of 3-carboxy-2-hydroxy-4-methylpentanoate (3-isopropylmalate) to 3-carboxy-4-methyl-2-oxopentanoate. The product decarboxylates to 4-methyl-2 oxopentanoate. The chain is 3-isopropylmalate dehydrogenase 2 from Bradyrhizobium diazoefficiens (strain JCM 10833 / BCRC 13528 / IAM 13628 / NBRC 14792 / USDA 110).